The primary structure comprises 51 residues: UPF0320 protein YOL166W-A (51 aa).

Belongs to the UPF0320 family.

The chain is UPF0320 protein YOL166W-A from Saccharomyces cerevisiae (strain ATCC 204508 / S288c) (Baker's yeast).